Reading from the N-terminus, the 460-residue chain is NADH-ubiquinone oxidoreductase chain 4 (460 aa).

13 consecutive transmembrane segments (helical) span residues 22 to 42, 61 to 81, 94 to 113, 117 to 139, 148 to 168, 195 to 217, 225 to 245, 258 to 278, 285 to 304, 308 to 330, 351 to 371, 394 to 414, and 436 to 456; these read WLWP…ITWL, PLST…LLAS, RMYI…AFGA, IMFY…RWGN, TYFL…LLML, IWWA…HLWL, PVAG…YGMM, MVYP…SICL, SLIA…GILI, WGFT…LFCL, IALP…LALP, LILT…MFLM, and LLMA…ALLW.

It belongs to the complex I subunit 4 family.

It localises to the mitochondrion membrane. The catalysed reaction is a ubiquinone + NADH + 5 H(+)(in) = a ubiquinol + NAD(+) + 4 H(+)(out). Core subunit of the mitochondrial membrane respiratory chain NADH dehydrogenase (Complex I) that is believed to belong to the minimal assembly required for catalysis. Complex I functions in the transfer of electrons from NADH to the respiratory chain. The immediate electron acceptor for the enzyme is believed to be ubiquinone. In Gadus morhua (Atlantic cod), this protein is NADH-ubiquinone oxidoreductase chain 4 (MT-ND4).